The sequence spans 1195 residues: DNA-directed RNA polymerase subunit Rpo2 (1195 aa).

Residues 894–909 show a composition bias toward basic and acidic residues; sequence LEEGEERLGPQRRRES. Positions 894 to 914 are disordered; it reads LEEGEERLGPQRRRESSVTMR. Zn(2+) contacts are provided by C1135, C1140, C1155, and C1158.

It belongs to the RNA polymerase beta chain family. In terms of assembly, part of the RNA polymerase complex. Zn(2+) is required as a cofactor.

It is found in the cytoplasm. The enzyme catalyses RNA(n) + a ribonucleoside 5'-triphosphate = RNA(n+1) + diphosphate. Its function is as follows. DNA-dependent RNA polymerase (RNAP) catalyzes the transcription of DNA into RNA using the four ribonucleoside triphosphates as substrates. This subunit is involved in DNA promoter recognition. This Thermoplasma acidophilum (strain ATCC 25905 / DSM 1728 / JCM 9062 / NBRC 15155 / AMRC-C165) protein is DNA-directed RNA polymerase subunit Rpo2.